The primary structure comprises 334 residues: Ornithine carbamoyltransferase (334 aa).

Carbamoyl phosphate is bound by residues 57-60, Gln84, Arg108, and 135-138; these read STRT and HPTQ. Residues Asn168, Asp232, and 236-237 contribute to the L-ornithine site; that span reads SM. Residues 274–275 and Arg321 each bind carbamoyl phosphate; that span reads CL.

This sequence belongs to the aspartate/ornithine carbamoyltransferase superfamily. OTCase family.

Its subcellular location is the cytoplasm. The enzyme catalyses carbamoyl phosphate + L-ornithine = L-citrulline + phosphate + H(+). Its pathway is amino-acid biosynthesis; L-arginine biosynthesis; L-arginine from L-ornithine and carbamoyl phosphate: step 1/3. In terms of biological role, reversibly catalyzes the transfer of the carbamoyl group from carbamoyl phosphate (CP) to the N(epsilon) atom of ornithine (ORN) to produce L-citrulline. This Actinobacillus pleuropneumoniae serotype 5b (strain L20) protein is Ornithine carbamoyltransferase.